Consider the following 349-residue polypeptide: MRDRLLALAESARREIGGASELSAVEALRVRYLGKKGELSGVLGGMGKLPPDERRSLGEVANSVKAELEKLLAEAVERAEAAALEAQLQGPGLDVTLPGRGVALGSRHPVSRTMEEIVRTFSRLGFDVASGPEIELDYFNFEALNLPKDHPARDMQDTFYVDEATLGHAKKADSSALLRTHTSPVQVRYMLNRKPPIRAVMPGRVYRRDSDITHTPMFHQVEGLLVDKGVTFAELKGSLAAFVTAFFGSDTRTRFRPSFFPFTEPSAEVDITCTNCAGKGCRICKQTGWLEVLGSGMVHPNVFTSAGYDPNEVTGYAFGMGVERIAMLRYRIDDLRMMFENDARFLEQF.

E264 is a binding site for Mg(2+).

The protein belongs to the class-II aminoacyl-tRNA synthetase family. Phe-tRNA synthetase alpha subunit type 1 subfamily. Tetramer of two alpha and two beta subunits. The cofactor is Mg(2+).

The protein localises to the cytoplasm. It carries out the reaction tRNA(Phe) + L-phenylalanine + ATP = L-phenylalanyl-tRNA(Phe) + AMP + diphosphate + H(+). The polypeptide is Phenylalanine--tRNA ligase alpha subunit (Myxococcus xanthus (strain DK1622)).